Here is a 319-residue protein sequence, read N- to C-terminus: Acetyl-coenzyme A carboxylase carboxyl transferase subunit alpha (319 aa).

In terms of domain architecture, CoA carboxyltransferase C-terminal spans 35-296 (NIDEEVHRLR…KAQLLADLAD (262 aa)).

It belongs to the AccA family. In terms of assembly, acetyl-CoA carboxylase is a heterohexamer composed of biotin carboxyl carrier protein (AccB), biotin carboxylase (AccC) and two subunits each of ACCase subunit alpha (AccA) and ACCase subunit beta (AccD).

The protein localises to the cytoplasm. It catalyses the reaction N(6)-carboxybiotinyl-L-lysyl-[protein] + acetyl-CoA = N(6)-biotinyl-L-lysyl-[protein] + malonyl-CoA. It participates in lipid metabolism; malonyl-CoA biosynthesis; malonyl-CoA from acetyl-CoA: step 1/1. In terms of biological role, component of the acetyl coenzyme A carboxylase (ACC) complex. First, biotin carboxylase catalyzes the carboxylation of biotin on its carrier protein (BCCP) and then the CO(2) group is transferred by the carboxyltransferase to acetyl-CoA to form malonyl-CoA. The polypeptide is Acetyl-coenzyme A carboxylase carboxyl transferase subunit alpha (Citrobacter koseri (strain ATCC BAA-895 / CDC 4225-83 / SGSC4696)).